A 353-amino-acid chain; its full sequence is MGSLYSEYLNPNKVQEHYNYTKETLETQETTSRQVASAFIVILCCAIVVENLLVLIAVARNSKFHSAMYLFLGNLAASDLLAGVAFVANTLLSGSVTLRLTPVQWFAREGSAFITLSASVFSLLAIAIERHVAIAKVKLYGSDKSCRMLLLIGASWLISLVLGGLPILGWNCLGHLEACSTVLPLYAKHYVLCVVTIFSIILLAIVALYVRIYCVVRSSHADMAAPQTLALLKTVTIVLGVFIVCWLPAFSILLLDYACPVHSCPILYKAHYFFAVSTLNSLLNPVIYTWRSRDLRREVLRPLQCWRPGVGVQGRRRGGTPGHHLLPLRSSSSLERGMHMPTSPTFLEGNTVV.

The Extracellular segment spans residues 1 to 34; it reads MGSLYSEYLNPNKVQEHYNYTKETLETQETTSRQ. A glycan (N-linked (GlcNAc...) asparagine) is linked at Asn19. Residues 35 to 59 form a helical membrane-spanning segment; the sequence is VASAFIVILCCAIVVENLLVLIAVA. The Cytoplasmic segment spans residues 60-66; it reads RNSKFHS. A helical transmembrane segment spans residues 67–95; that stretch reads AMYLFLGNLAASDLLAGVAFVANTLLSGS. Residues 96-109 lie on the Extracellular side of the membrane; the sequence is VTLRLTPVQWFARE. The helical transmembrane segment at 110–128 threads the bilayer; it reads GSAFITLSASVFSLLAIAI. At 129 to 147 the chain is on the cytoplasmic side; it reads ERHVAIAKVKLYGSDKSCR. Residues 148–173 form a helical membrane-spanning segment; sequence MLLLIGASWLISLVLGGLPILGWNCL. At 174–189 the chain is on the extracellular side; sequence GHLEACSTVLPLYAKH. A helical transmembrane segment spans residues 190-210; that stretch reads YVLCVVTIFSIILLAIVALYV. The Cytoplasmic segment spans residues 211 to 233; sequence RIYCVVRSSHADMAAPQTLALLK. A helical transmembrane segment spans residues 234 to 255; the sequence is TVTIVLGVFIVCWLPAFSILLL. Over 256-271 the chain is Extracellular; that stretch reads DYACPVHSCPILYKAH. A helical membrane pass occupies residues 272-292; the sequence is YFFAVSTLNSLLNPVIYTWRS. At 293–353 the chain is on the cytoplasmic side; the sequence is RDLRREVLRP…PTFLEGNTVV (61 aa). Residue Cys305 is the site of S-palmitoyl cysteine attachment.

Belongs to the G-protein coupled receptor 1 family.

It is found in the cell membrane. Receptor for the lysosphingolipid sphingosine 1-phosphate (S1P). S1P is a bioactive lysophospholipid that elicits diverse physiological effects on most types of cells and tissues. When expressed in rat HTC4 hepatoma cells, is capable of mediating S1P-induced cell proliferation and suppression of apoptosis. Receptor for the chemokine-like protein FAM19A5. Mediates the inhibitory effect of FAM19A5 on vascular smooth muscle cell proliferation and migration. In lymphoid follicles, couples the binding of S1P to the activation of GNA13 and downstream inhibition of AKT activation leading to suppression of germinal center (GC) B cell growth and migration outside the GC niche. In Homo sapiens (Human), this protein is Sphingosine 1-phosphate receptor 2 (S1PR2).